The following is a 130-amino-acid chain: Small ribosomal subunit protein uS11 (130 aa).

Belongs to the universal ribosomal protein uS11 family. In terms of assembly, part of the 30S ribosomal subunit. Interacts with proteins S7 and S18. Binds to IF-3.

Located on the platform of the 30S subunit, it bridges several disparate RNA helices of the 16S rRNA. Forms part of the Shine-Dalgarno cleft in the 70S ribosome. The protein is Small ribosomal subunit protein uS11 of Syntrophus aciditrophicus (strain SB).